Reading from the N-terminus, the 207-residue chain is Small ribosomal subunit protein uS4c (207 aa).

In terms of domain architecture, S4 RNA-binding spans 92–156 (MRLDNILFRL…YQSIITKRIE (65 aa)).

This sequence belongs to the universal ribosomal protein uS4 family. Part of the 30S ribosomal subunit. Contacts protein S5. The interaction surface between S4 and S5 is involved in control of translational fidelity.

Its subcellular location is the plastid. The protein localises to the chloroplast. One of the primary rRNA binding proteins, it binds directly to 16S rRNA where it nucleates assembly of the body of the 30S subunit. Its function is as follows. With S5 and S12 plays an important role in translational accuracy. This Equisetum arvense (Field horsetail) protein is Small ribosomal subunit protein uS4c (rps4).